We begin with the raw amino-acid sequence, 230 residues long: Urease accessory protein UreE (230 aa).

Basic residues predominate over residues 200–210 (HAIHSHGTGHT). The tract at residues 200–230 (HAIHSHGTGHTHSHDHDHSHSHGDHDHDHKH) is disordered. Residues 211–230 (HSHDHDHSHSHGDHDHDHKH) show a composition bias toward basic and acidic residues.

Belongs to the UreE family.

Its subcellular location is the cytoplasm. In terms of biological role, involved in urease metallocenter assembly. Binds nickel. Probably functions as a nickel donor during metallocenter assembly. This chain is Urease accessory protein UreE, found in Yersinia enterocolitica serotype O:8 / biotype 1B (strain NCTC 13174 / 8081).